A 183-amino-acid chain; its full sequence is Translation initiation factor IF-3 (183 aa).

It belongs to the IF-3 family. As to quaternary structure, monomer.

Its subcellular location is the cytoplasm. IF-3 binds to the 30S ribosomal subunit and shifts the equilibrium between 70S ribosomes and their 50S and 30S subunits in favor of the free subunits, thus enhancing the availability of 30S subunits on which protein synthesis initiation begins. The chain is Translation initiation factor IF-3 from Azobacteroides pseudotrichonymphae genomovar. CFP2.